A 270-amino-acid polypeptide reads, in one-letter code: MGNTSSERAALERQAGHKTPRRDSSGGTKDGDRPKILMDSPEDADIFHTEEMKAPEKEEFLAWQHDLEVNEKAPAQARPTVFRWTGGGKEVYLSGSFNNWSKLPLTRSQNNFVAILDLPEGEHQYKFFVDGQWTHDPSEPIVTSQLGTVNNIIQVKKTDFEVFDALMVDSQKCSDVSELSSSPPGPYHQEPYISKPEERFKAPPILPPHLLQVILNKDTGISCDPALLPEPNHVMLNHLYALSIKDGVMVLSATHRYKKKYVTTLLYKPI.

A disordered region spans residues 1–43; sequence MGNTSSERAALERQAGHKTPRRDSSGGTKDGDRPKILMDSPED. Residue G2 is the site of N-myristoyl glycine attachment. T4 is subject to Phosphothreonine. Phosphoserine occurs at positions 5 and 6. Over residues 9-36 the composition is skewed to basic and acidic residues; it reads AALERQAGHKTPRRDSSGGTKDGDRPKI. T19 is modified (phosphothreonine). Residues S24 and S25 each carry the phosphoserine; by autocatalysis modification. Phosphoserine occurs at positions 40, 96, and 101. The segment at 68 to 163 is glycogen-binding domain; it reads EVNEKAPAQA…QVKKTDFEVF (96 aa). S108 carries the post-translational modification Phosphoserine; by autocatalysis. The residue at position 148 (T148) is a Phosphothreonine. The residue at position 182 (S182) is a Phosphoserine. The residue at position 201 (K201) is an N6-succinyllysine.

The protein belongs to the 5'-AMP-activated protein kinase beta subunit family. As to quaternary structure, AMPK is a heterotrimer of an alpha catalytic subunit (PRKAA1 or PRKAA2), a beta (PRKAB1 or PRKAB2) and a gamma non-catalytic subunits (PRKAG1, PRKAG2 or PRKAG3). Interacts with FNIP1 and FNIP2. In terms of processing, phosphorylated when associated with the catalytic subunit (PRKAA1 or PRKAA2). Phosphorylated by ULK1; leading to negatively regulate AMPK activity and suggesting the existence of a regulatory feedback loop between ULK1 and AMPK. Highly expressed in kidney, heart, white adipose tissue, lung and spleen.

Non-catalytic subunit of AMP-activated protein kinase (AMPK), an energy sensor protein kinase that plays a key role in regulating cellular energy metabolism. In response to reduction of intracellular ATP levels, AMPK activates energy-producing pathways and inhibits energy-consuming processes: inhibits protein, carbohydrate and lipid biosynthesis, as well as cell growth and proliferation. AMPK acts via direct phosphorylation of metabolic enzymes, and by longer-term effects via phosphorylation of transcription regulators. Also acts as a regulator of cellular polarity by remodeling the actin cytoskeleton; probably by indirectly activating myosin. Beta non-catalytic subunit acts as a scaffold on which the AMPK complex assembles, via its C-terminus that bridges alpha (PRKAA1 or PRKAA2) and gamma subunits (PRKAG1, PRKAG2 or PRKAG3). The sequence is that of 5'-AMP-activated protein kinase subunit beta-1 (Prkab1) from Rattus norvegicus (Rat).